A 275-amino-acid polypeptide reads, in one-letter code: Large ribosomal subunit protein uL2 (275 aa).

A disordered region spans residues 224–275; it reads AMNPVDHPHGGGEAKAGQGNPHPVTPWGVPTKGYKTRKNKRTQQFIVRDRRG.

It belongs to the universal ribosomal protein uL2 family. In terms of assembly, part of the 50S ribosomal subunit. Forms a bridge to the 30S subunit in the 70S ribosome.

Functionally, one of the primary rRNA binding proteins. Required for association of the 30S and 50S subunits to form the 70S ribosome, for tRNA binding and peptide bond formation. It has been suggested to have peptidyltransferase activity; this is somewhat controversial. Makes several contacts with the 16S rRNA in the 70S ribosome. The polypeptide is Large ribosomal subunit protein uL2 (Xanthomonas axonopodis pv. citri (strain 306)).